We begin with the raw amino-acid sequence, 260 residues long: DNA import protein CedA (260 aa).

6 helical membrane-spanning segments follow: residues Leu-13 to Tyr-33, Ile-47 to Leu-67, Ala-110 to Phe-130, Ile-140 to Phe-160, Ala-169 to Ala-189, and Ile-220 to Met-240.

In terms of assembly, forms a complex composed of CedA, CedA1 and CedA2.

Its subcellular location is the cell membrane. Its function is as follows. Part of the Ced system, which is involved in DNA import. The sequence is that of DNA import protein CedA from Sulfolobus acidocaldarius (strain ATCC 33909 / DSM 639 / JCM 8929 / NBRC 15157 / NCIMB 11770).